Here is a 378-residue protein sequence, read N- to C-terminus: D-galactarolactone cycloisomerase (378 aa).

Mg(2+)-binding residues include Asp-194, Glu-220, and Glu-246. His-296 acts as the Proton acceptor in catalysis.

Belongs to the mandelate racemase/muconate lactonizing enzyme family. Homooctamer. Mg(2+) is required as a cofactor.

It carries out the reaction D-glucaro-1,4-lactone = 5-dehydro-4-deoxy-D-glucarate + H(+). The catalysed reaction is D-galactaro-1,4-lactone = 5-dehydro-4-deoxy-D-glucarate + H(+). It participates in carbohydrate acid metabolism; D-galacturonate degradation via prokaryotic oxidative pathway. Its function is as follows. Catalyzes the ring opening of D-galactaro-1,4-lactone to yield 5-keto-4-deoxy-D-glucarate (KDG) via a beta-elimination reaction. This is a step in the oxidative degradation pathway of D-galacturonate, which allows A.tumefaciens to utilize D-galacturonate as a sole carbon source. To a lesser extent, can also use D-glucaro-1,4-lactone as substrate to produce KDG, but cannot use D-galactaro-1,5-lactone, D-glucaro-6,3-lactone and linear D-glucarate. This is D-galactarolactone cycloisomerase (gci) from Agrobacterium fabrum (strain C58 / ATCC 33970) (Agrobacterium tumefaciens (strain C58)).